The chain runs to 292 residues: N-acetylneuraminate lyase (292 aa).

Aceneuramate-binding residues include Ser47 and Thr48. The active-site Proton donor is the Tyr136. The active-site Schiff-base intermediate with substrate is the Lys164. Residues Thr166, Gly188, Asp190, Glu191, and Ser207 each contribute to the aceneuramate site.

This sequence belongs to the DapA family. NanA subfamily. In terms of assembly, homotetramer.

It is found in the cytoplasm. It carries out the reaction aceneuramate = aldehydo-N-acetyl-D-mannosamine + pyruvate. The protein operates within amino-sugar metabolism; N-acetylneuraminate degradation; D-fructose 6-phosphate from N-acetylneuraminate: step 1/5. Its function is as follows. Catalyzes the reversible aldol cleavage of N-acetylneuraminic acid (sialic acid; Neu5Ac) to form pyruvate and N-acetylmannosamine (ManNAc) via a Schiff base intermediate. This Actinobacillus pleuropneumoniae serotype 3 (strain JL03) protein is N-acetylneuraminate lyase.